A 75-amino-acid chain; its full sequence is Ribonuclease pancreatic (75 aa).

Disulfide bonds link cysteine 7/cysteine 65 and cysteine 46/cysteine 53. Asparagine 15 carries N-linked (GlcNAc...) asparagine glycosylation. Substrate is bound by residues lysine 22–threonine 26, lysine 47, and arginine 66.

It belongs to the pancreatic ribonuclease family. As to quaternary structure, monomer. Interacts with and forms tight 1:1 complexes with RNH1. Dimerization of two such complexes may occur. Interaction with RNH1 inhibits this protein. In terms of tissue distribution, pancreas.

Its subcellular location is the secreted. It catalyses the reaction an [RNA] containing cytidine + H2O = an [RNA]-3'-cytidine-3'-phosphate + a 5'-hydroxy-ribonucleotide-3'-[RNA].. The enzyme catalyses an [RNA] containing uridine + H2O = an [RNA]-3'-uridine-3'-phosphate + a 5'-hydroxy-ribonucleotide-3'-[RNA].. Its function is as follows. Endonuclease that catalyzes the cleavage of RNA on the 3' side of pyrimidine nucleotides. Acts on single-stranded and double-stranded RNA. This chain is Ribonuclease pancreatic (rnase1), found in Oryx leucoryx (Arabian oryx).